A 192-amino-acid polypeptide reads, in one-letter code: MGTIKSGDIEKGTFLLFKGMPHIVLEREFSKMGRGGSIVRLKLKNLKNKSVVKETLKGADTVEEIEVLEVASQYLYRENENLIFMDLETYDQFDVNLREISNIEDKVMFLQEAGIYSLVKWDNEVIDLRLPPKVAFEVVDAEIAVKGDTVTNAMKNVTLHTGLVVKAPLFINVGDKILVNSETKEYAERVKE.

The protein belongs to the elongation factor P family.

The protein resides in the cytoplasm. The protein operates within protein biosynthesis; polypeptide chain elongation. Involved in peptide bond synthesis. Stimulates efficient translation and peptide-bond synthesis on native or reconstituted 70S ribosomes in vitro. Probably functions indirectly by altering the affinity of the ribosome for aminoacyl-tRNA, thus increasing their reactivity as acceptors for peptidyl transferase. In Borrelia turicatae (strain 91E135), this protein is Elongation factor P.